A 466-amino-acid chain; its full sequence is Integrin-linked protein kinase homolog pat-4 (466 aa).

ANK repeat units follow at residues 50 to 79 (HAFS…RVNS), 83 to 112 (GDDT…DVNA), and 116 to 145 (HGMT…AVNV). Residues 210 to 465 (LNLITKIAES…QIIPILERMI (256 aa)) enclose the Protein kinase domain.

Belongs to the protein kinase superfamily. TKL Ser/Thr protein kinase family. As to quaternary structure, interacts (via protein kinase domain) with unc-112 (via N-terminus). Interacts (via ANK repeats) with unc-97 (via first LIM domain). Interacts (via protein kinase domain) with pat-6 (via C-terminus CH domain). May form a complex with unc-112, unc-97 and pat-6. Does not interact with integrin pat-3. Component of an integrin containing attachment complex, composed of at least pat-2, pat-3, pat-4, pat-6, unc-52, unc-97 and unc-112. Expressed in body wall muscle.

It is found in the cytoplasm. The protein localises to the myofibril. The protein resides in the sarcomere. It localises to the m line. Its subcellular location is the basal cell membrane. Functionally, probable pseudokinase that acts as an adapter protein. Component of an integrin containing attachment complex, which is required for muscle development and maintenance. Involved in the assembly of dense bodies and M lines during body wall muscle development by recruiting several of their components including integrin pat-3, cpna-1, unc-89 and unc-112 to integrin-mediated attachment sites. Plays a role in distal tip cell (DTC) migration and in oocyte development probably by regulating the actin cytoskeleton. During the formation of neuromuscular junctions at the larval stage, negatively regulates membrane protrusion from body wall muscles. May be involved in thermotolerance and lifespan. The sequence is that of Integrin-linked protein kinase homolog pat-4 from Caenorhabditis elegans.